A 483-amino-acid polypeptide reads, in one-letter code: tRNA sulfurtransferase (483 aa).

A THUMP domain is found at 62–166 (PEICDALTRI…QDKLILVKAR (105 aa)). Residues 184 to 185 (LI), Lys266, Gly288, and Gln297 contribute to the ATP site. An intrachain disulfide couples Cys345 to Cys457. Positions 405–483 (LADTDVLLDI…GYTNVKVYRP (79 aa)) constitute a Rhodanese domain. The active-site Cysteine persulfide intermediate is Cys457.

Belongs to the ThiI family.

The protein resides in the cytoplasm. The enzyme catalyses [ThiI sulfur-carrier protein]-S-sulfanyl-L-cysteine + a uridine in tRNA + 2 reduced [2Fe-2S]-[ferredoxin] + ATP + H(+) = [ThiI sulfur-carrier protein]-L-cysteine + a 4-thiouridine in tRNA + 2 oxidized [2Fe-2S]-[ferredoxin] + AMP + diphosphate. The catalysed reaction is [ThiS sulfur-carrier protein]-C-terminal Gly-Gly-AMP + S-sulfanyl-L-cysteinyl-[cysteine desulfurase] + AH2 = [ThiS sulfur-carrier protein]-C-terminal-Gly-aminoethanethioate + L-cysteinyl-[cysteine desulfurase] + A + AMP + 2 H(+). The protein operates within cofactor biosynthesis; thiamine diphosphate biosynthesis. Its function is as follows. Catalyzes the ATP-dependent transfer of a sulfur to tRNA to produce 4-thiouridine in position 8 of tRNAs, which functions as a near-UV photosensor. Also catalyzes the transfer of sulfur to the sulfur carrier protein ThiS, forming ThiS-thiocarboxylate. This is a step in the synthesis of thiazole, in the thiamine biosynthesis pathway. The sulfur is donated as persulfide by IscS. This is tRNA sulfurtransferase from Yersinia pseudotuberculosis serotype O:1b (strain IP 31758).